The chain runs to 399 residues: G2/mitotic-specific cyclin-B2 (399 aa).

Residues 58–78 are disordered; sequence PVKATKGPGKMTNTVVPPKPP.

It belongs to the cyclin family. Cyclin AB subfamily. Interacts with the CDK1 protein kinase to form a serine/threonine kinase holoenzyme complex also known as maturation promoting factor (MPF). The cyclin subunit imparts substrate specificity to the complex.

Essential for the control of the cell cycle at the G2/M (mitosis) transition. This Gallus gallus (Chicken) protein is G2/mitotic-specific cyclin-B2 (CCNB2).